The sequence spans 241 residues: Putative ABC transporter ATP-binding protein CA_C0773 (241 aa).

The 240-residue stretch at 2 to 241 (IKLEKVSFTY…REFLMECNII (240 aa)) folds into the ABC transporter domain. 34 to 41 (GPNGSGKS) contributes to the ATP binding site.

It belongs to the ABC transporter superfamily.

The protein resides in the cell membrane. Functionally, probably part of an ABC transporter complex. Responsible for energy coupling to the transport system. The chain is Putative ABC transporter ATP-binding protein CA_C0773 from Clostridium acetobutylicum (strain ATCC 824 / DSM 792 / JCM 1419 / IAM 19013 / LMG 5710 / NBRC 13948 / NRRL B-527 / VKM B-1787 / 2291 / W).